We begin with the raw amino-acid sequence, 294 residues long: 2-oxoglutaramate amidase (294 aa).

Residues L16–F261 form the CN hydrolase domain. The active-site Proton acceptor is the E55. K129 serves as the catalytic Proton donor. The active-site Nucleophile is the C168.

It belongs to the carbon-nitrogen hydrolase superfamily. NIT1/NIT2 family.

It carries out the reaction 2-oxoglutaramate + H2O = 2-oxoglutarate + NH4(+). It participates in alkaloid degradation; nicotine degradation. Its function is as follows. Catalyzes the conversion of 2-oxoglutaramate to 2-oxoglutarate. Together with glutamate dehydrogenase, may form a physiologically relevant enzyme couple, leading to transformation of metabolically inert 2-oxoglutaramate derived from trihydroxypyridine into glutamate, a central compound of nitrogen metabolism. The chain is 2-oxoglutaramate amidase from Paenarthrobacter nicotinovorans (Arthrobacter nicotinovorans).